Consider the following 367-residue polypeptide: tRNA 2-selenouridine synthase (367 aa).

Positions 12 to 136 (FLNDRPLMDA…LRGFLIDTLE (125 aa)) constitute a Rhodanese domain. Cys95 functions as the S-selanylcysteine intermediate in the catalytic mechanism.

It belongs to the SelU family. In terms of assembly, monomer.

It carries out the reaction 5-methylaminomethyl-2-thiouridine(34) in tRNA + selenophosphate + (2E)-geranyl diphosphate + H2O + H(+) = 5-methylaminomethyl-2-selenouridine(34) in tRNA + (2E)-thiogeraniol + phosphate + diphosphate. The catalysed reaction is 5-methylaminomethyl-2-thiouridine(34) in tRNA + (2E)-geranyl diphosphate = 5-methylaminomethyl-S-(2E)-geranyl-thiouridine(34) in tRNA + diphosphate. The enzyme catalyses 5-methylaminomethyl-S-(2E)-geranyl-thiouridine(34) in tRNA + selenophosphate + H(+) = 5-methylaminomethyl-2-(Se-phospho)selenouridine(34) in tRNA + (2E)-thiogeraniol. It catalyses the reaction 5-methylaminomethyl-2-(Se-phospho)selenouridine(34) in tRNA + H2O = 5-methylaminomethyl-2-selenouridine(34) in tRNA + phosphate. Its function is as follows. Involved in the post-transcriptional modification of the uridine at the wobble position (U34) of tRNA(Lys), tRNA(Glu) and tRNA(Gln). Catalyzes the conversion of 2-thiouridine (S2U-RNA) to 2-selenouridine (Se2U-RNA). Acts in a two-step process involving geranylation of 2-thiouridine (S2U) to S-geranyl-2-thiouridine (geS2U) and subsequent selenation of the latter derivative to 2-selenouridine (Se2U) in the tRNA chain. The sequence is that of tRNA 2-selenouridine synthase from Pseudomonas fluorescens (strain Pf0-1).